A 259-amino-acid polypeptide reads, in one-letter code: Protein CDI (259 aa).

Residues 236 to 259 (FADLWLNEMEEYNKENKKEADNAK) adopt a coiled-coil conformation.

In terms of tissue distribution, mostly expressed in pollen grains and pollen tubes, and, at low levels, in seedlings, roots, stems, leaves, flowers and siliques.

It localises to the cytoplasm. It is found in the cytosol. Probable nucleotide-diphospho-sugar transferase required for pollen germination and tube growth. The chain is Protein CDI from Arabidopsis thaliana (Mouse-ear cress).